Reading from the N-terminus, the 217-residue chain is Ras-related protein RGP2 (217 aa).

Residues 19-26 (GDSGVGKS), 67-71 (DTAGQ), and 125-128 (NKSD) contribute to the GTP site. Residues C214 and C215 are each lipidated (S-geranylgeranyl cysteine).

Belongs to the small GTPase superfamily. Rab family.

It is found in the cell membrane. This Oryza sativa subsp. japonica (Rice) protein is Ras-related protein RGP2 (RGP2).